The following is a 181-amino-acid chain: Large ribosomal subunit protein uL5 (181 aa).

This sequence belongs to the universal ribosomal protein uL5 family. In terms of assembly, part of the 50S ribosomal subunit; part of the 5S rRNA/L5/L18/L25 subcomplex. Contacts the 5S rRNA and the P site tRNA. Forms a bridge to the 30S subunit in the 70S ribosome.

Its function is as follows. This is one of the proteins that bind and probably mediate the attachment of the 5S RNA into the large ribosomal subunit, where it forms part of the central protuberance. In the 70S ribosome it contacts protein S13 of the 30S subunit (bridge B1b), connecting the 2 subunits; this bridge is implicated in subunit movement. Contacts the P site tRNA; the 5S rRNA and some of its associated proteins might help stabilize positioning of ribosome-bound tRNAs. The chain is Large ribosomal subunit protein uL5 from Sulfurimonas denitrificans (strain ATCC 33889 / DSM 1251) (Thiomicrospira denitrificans (strain ATCC 33889 / DSM 1251)).